Consider the following 37-residue polypeptide: Large ribosomal subunit protein bL36 (37 aa).

This sequence belongs to the bacterial ribosomal protein bL36 family.

The polypeptide is Large ribosomal subunit protein bL36 (rpmJ) (Mycoplasma sp).